Reading from the N-terminus, the 280-residue chain is HCLS1-associated protein X-1 (280 aa).

An N-acetylserine modification is found at S2. Residues 2-45 form a required for localization in mitochondria region; that stretch reads SVFDLFRGFFGFPGPRSHRDPFFGGMTRDDDDDDDDDDEAEEDR. 2 disordered regions span residues 12 to 70 and 100 to 263; these read GFPG…SFSP and TLPS…SALD. Residues 30-43 show a composition bias toward acidic residues; the sequence is DDDDDDDDDDEAEE. The segment at 115–280 is involved in HCLS1 binding; that stretch reads TPGERLREGQ…LLLGRWFRSR (166 aa). Basic and acidic residues-rich tracts occupy residues 116–125 and 134–154; these read PGERLREGQT and PDSHQPRIFEGVLESHAKPES. The involved in CASP9 binding stretch occupies residues 176 to 207; sequence VSPHSRAKEDKDLDSQVSQEGLGPLLQPQPKS. Residues 177–248 form an involved in GNA13 binding region; it reads SPHSRAKEDK…TTVTHQEAHD (72 aa). Positions 184 to 280 are required for localization in sarcoplasmic reticulum; it reads EDKDLDSQVS…LLLGRWFRSR (97 aa). Residues 185–280 form an involved in PKD2 binding region; the sequence is DKDLDSQVSQ…LLLGRWFRSR (96 aa). Phosphoserine is present on residues S190 and S193. Residues 204 to 226 form an involved in PLN binding region; it reads QPKSYFKSISVTKITKPDGTVEE. The interval 204–246 is involved in ATP2A2 binding; that stretch reads QPKSYFKSISVTKITKPDGTVEERRTVVDSEGRRETTVTHQEA. Residues 211–280 are mediates interaction with UCP3; the sequence is SISVTKITKP…LLLGRWFRSR (70 aa). Residues 218–256 show a composition bias toward basic and acidic residues; it reads TKPDGTVEERRTVVDSEGRRETTVTHQEAHDSSRSDPDS. The interval 271–280 is required for ITGB6 binding; sequence LLLGRWFRSR.

This sequence belongs to the HAX1 family. In terms of assembly, interacts with ABCB1, ABCB4 and ABCB11. Directly associates with HCLS1/HS1, through binding to its N-terminal region. Interacts with CTTN. Interacts with PKD2. Interacts with GNA13. Interacts with CASP9. Interacts with ITGB6. Interacts with PLN and ATP2A2; these interactions are inhibited by calcium. Interacts with GRB7. Interacts (via C-terminus) with XIAP/BIRC4 (via BIR 2 domain and BIR 3 domain) and this interaction blocks ubiquitination of XIAP/BIRC4. Interacts with TPC2. Interacts with KCNC3. Interacts with XPO1. Interacts with RNF217. Interacts with UCP3; the interaction is direct and calcium-dependent. Interacts with MAPRE2; this interaction regulates cell migration in keratinocytes. As to expression, ubiquitous, with highest levels in kidney and liver (at protein level).

The protein localises to the mitochondrion matrix. Its subcellular location is the endoplasmic reticulum. The protein resides in the nucleus membrane. It is found in the cytoplasmic vesicle. It localises to the cytoplasm. The protein localises to the cell cortex. Its subcellular location is the cell membrane. The protein resides in the sarcoplasmic reticulum. It is found in the P-body. It localises to the nucleus. Its function is as follows. Recruits the Arp2/3 complex to the cell cortex and regulates reorganization of the cortical actin cytoskeleton via its interaction with KCNC3 and the Arp2/3 complex. Slows down the rate of inactivation of KCNC3 channels. Promotes GNA13-mediated cell migration. Involved in the clathrin-mediated endocytosis pathway. May be involved in internalization of ABC transporters such as ABCB11. May inhibit CASP9 and CASP3. Promotes cell survival. May regulate intracellular calcium pools. This Mus musculus (Mouse) protein is HCLS1-associated protein X-1 (Hax1).